The primary structure comprises 1033 residues: MEKVDVKESAVGREMRIRKQWNEQNIFEQSIQNREGAQSFVFYEGPPTANGLPHVGHALGRTIKDLVARYKTMAGYKVLRKAGWDTHGLPVELGVEKQLGISGKHEIEEYGIEPFIQKCKESVFTYEKQWREFTESIGYWVDMDDPYVTLKNPYIESVWHILGTIHEKGLLYKGHRVSPYCPSCQTSLSSHEVAQGYKTVKDLSATVKFKVKDSENEYFLGWTTTPWTLPANVALAVHPNMEYVKAKQESHVYIVAKERVQEVLKENYEVLSVHKGEELLNTSYTAPFPMKEVTNGYRVIAADFVTGDSGTGLVHIAPAYGEDDYRVVQSEGLSFLHVVDEKGEYTEAVPFLKGKFVKDCDVDIVRYLAKEGLLYHKEKYEHSYPHCWRCDSPLLYYAGESWLIRTTAIKDTFLQNNDSVTWYPDHMKHGRFGKFLENMVDWNISRNRYWGTPLNVWECESCDHQFAPKSIAELRKHSTKETPEDLELHKPYVDEVQVCCGKCGGTMNRTPEVIDVWFDSGSMPFAQYHYPFENKELFEEQFPADVIAEGIDQTRGWFYSLLAVSALYTGKVPYKRVLSLGHVLDEEGQKMSKSKGNALDPVDLVDKFGADALRWALLVDSAPWNAKRFSERTVLEAKSKFVDTLVNVYSFYVLYANLDEYNPKETYDVKLTKLDEWVLSRLHSTTKKVRTALDDYQFTNAAREIAALVDEVSNWYVRRSRNRFWESGMNAEKAAAYETLHEVLVTISKLIAPFTPFVAEDIHLNLEGSSVHLADYPVVNESLLQPKLEAEMDAVLQVVELGRSNRNQHSLKVKQPLAELVLLEHNENDMDWESYRDIVMDELNVKAFHVELDETKYTSYQLKLNFKTAGPKFGKNVNAVNGWLKQLSQEEVQNFVSTGRAVYEATPEGEVVVTGEDVLVEKVAKSGFSNTTNGQYTVMLDTNVTEELLQEGVAREFIRAVQEYRKQLNLPVNLRVDIILDTEEELQRTLTNHKDLLEENLLVKQFTFGHLTNEDDELSLGETKLRIKLSAAN.

A 'HIGH' region motif is present at residues 47-57 (PTANGLPHVGH). Residues 590–594 (KMSKS) carry the 'KMSKS' region motif. Residue Lys-593 coordinates ATP.

This sequence belongs to the class-I aminoacyl-tRNA synthetase family. IleS type 2 subfamily. In terms of assembly, monomer. Zn(2+) serves as cofactor.

The protein localises to the cytoplasm. It catalyses the reaction tRNA(Ile) + L-isoleucine + ATP = L-isoleucyl-tRNA(Ile) + AMP + diphosphate. Functionally, catalyzes the attachment of isoleucine to tRNA(Ile). As IleRS can inadvertently accommodate and process structurally similar amino acids such as valine, to avoid such errors it has two additional distinct tRNA(Ile)-dependent editing activities. One activity is designated as 'pretransfer' editing and involves the hydrolysis of activated Val-AMP. The other activity is designated 'posttransfer' editing and involves deacylation of mischarged Val-tRNA(Ile). The sequence is that of Isoleucine--tRNA ligase 2 from Bacillus cereus (strain ATCC 14579 / DSM 31 / CCUG 7414 / JCM 2152 / NBRC 15305 / NCIMB 9373 / NCTC 2599 / NRRL B-3711).